Reading from the N-terminus, the 632-residue chain is MQTYNAGTFDVIVVGAGHAGVEAGLASGRMGAKTLMLTINLDMVAFMPCNPSVGGPAKGVVVREIDALGGEMGRNTDKTYIQMRMLNTGKGPAVRALRAQADKWDYQHEMKHTIEKEENITLRQGLVDRLVIEDGVCKGVITNSGAIYYAKTVVITTGTFSRGEIIVGELRYSSGPNNQQPSVKLSEHLEELGFELRRFKTGTPPRVKSSTIDYSKTEEQPGDDHPRAFSFDTVEMLLDQLPCWLTYTNETTHEIIQANLHRSPMFTATKKGTGARYCPSIEDKIVRFSDKPRHQIFLEPEGKNTEEVYVQGLSTSLPEEVQREMLRTIPGLENVEMMRVGYAIEYDAVMPDQLWPSLETKLVEGLFTAGQINGTSGYEEAAGQGLMAGINAARKVFAKEPVILGRDQAYIGVLIDDLVTKGTEEPYRLLTSRAEYRLLLRHDNADLRLTEIGHEIGLISDERYERFLAKQSAIEAEKERLQKTRIKPTAEVQAMLKEIGSGELKDGILAADLLRRPEITYDKIAQIVSRETFVTDEIAEQVEIQIKYEGYIQKSNLQVEKMKRMEDKKIPENIDYDAISGLATEALEKLKKIEPLSIAQASRISGVNPADISILLVYIEQGKIAKRDKEKA.

Residues 15–20 (GAGHAG), Val-127, and Ser-182 each bind FAD. The interval 203-226 (TPPRVKSSTIDYSKTEEQPGDDHP) is disordered. A compositionally biased stretch (basic and acidic residues) spans 215 to 226 (SKTEEQPGDDHP). 274-288 (GARYCPSIEDKIVRF) lines the NAD(+) pocket. Gln-371 lines the FAD pocket.

It belongs to the MnmG family. As to quaternary structure, homodimer. Heterotetramer of two MnmE and two MnmG subunits. FAD serves as cofactor.

The protein localises to the cytoplasm. In terms of biological role, NAD-binding protein involved in the addition of a carboxymethylaminomethyl (cmnm) group at the wobble position (U34) of certain tRNAs, forming tRNA-cmnm(5)s(2)U34. The polypeptide is tRNA uridine 5-carboxymethylaminomethyl modification enzyme MnmG (Listeria monocytogenes serotype 4b (strain F2365)).